Consider the following 230-residue polypeptide: MKKAVILLSGGMDSAVVTAIAQSQGFMVHALSIRYGQRHTSELDAAVRIARALNVVAHKVVDVDLRSIGGSALTDDIEIPDAGGEGIPVTYVPARNTIMLSLALGWAEVIGAADIFCGVNAVDYSGYPDCRPQFITAFETLANLATKVGVEGTQLHVHAPLQFLSKAEIVHEGLLHGVDFGLTVSCYRADVDGRACGRCDACKLRVAGFADAGVVDPTRYMELPCSLLLL.

Residue 8 to 18 coordinates ATP; that stretch reads LSGGMDSAVVT. Residues cysteine 186, cysteine 196, cysteine 199, and cysteine 202 each contribute to the Zn(2+) site.

This sequence belongs to the QueC family. It depends on Zn(2+) as a cofactor.

It carries out the reaction 7-carboxy-7-deazaguanine + NH4(+) + ATP = 7-cyano-7-deazaguanine + ADP + phosphate + H2O + H(+). Its pathway is purine metabolism; 7-cyano-7-deazaguanine biosynthesis. Catalyzes the ATP-dependent conversion of 7-carboxy-7-deazaguanine (CDG) to 7-cyano-7-deazaguanine (preQ(0)). This is 7-cyano-7-deazaguanine synthase from Xylella fastidiosa (strain M23).